The following is a 188-amino-acid chain: Acireductone dioxygenase (188 aa).

The Fe(2+) site is built by H97, H99, E103, and H141. H97, H99, E103, and H141 together coordinate Ni(2+).

Belongs to the acireductone dioxygenase (ARD) family. Monomer. It depends on Fe(2+) as a cofactor. Ni(2+) is required as a cofactor.

The enzyme catalyses 1,2-dihydroxy-5-(methylsulfanyl)pent-1-en-3-one + O2 = 3-(methylsulfanyl)propanoate + CO + formate + 2 H(+). The catalysed reaction is 1,2-dihydroxy-5-(methylsulfanyl)pent-1-en-3-one + O2 = 4-methylsulfanyl-2-oxobutanoate + formate + 2 H(+). It participates in amino-acid biosynthesis; L-methionine biosynthesis via salvage pathway; L-methionine from S-methyl-5-thio-alpha-D-ribose 1-phosphate: step 5/6. Functionally, catalyzes 2 different reactions between oxygen and the acireductone 1,2-dihydroxy-3-keto-5-methylthiopentene (DHK-MTPene) depending upon the metal bound in the active site. Fe-containing acireductone dioxygenase (Fe-ARD) produces formate and 2-keto-4-methylthiobutyrate (KMTB), the alpha-ketoacid precursor of methionine in the methionine recycle pathway. Ni-containing acireductone dioxygenase (Ni-ARD) produces methylthiopropionate, carbon monoxide and formate, and does not lie on the methionine recycle pathway. The protein is Acireductone dioxygenase of Gluconobacter oxydans (strain 621H) (Gluconobacter suboxydans).